The following is a 975-amino-acid chain: MTQQPQEDFERSVEDAQAWMKVIQEQLQVNDNTKGPRAALEARLRETEKICQLESEGMVKVELVLRAAEALLATCQEGQKPEILARLRDIKSQWEETVTYMTHCHSRIEWVWLHWSEYLLAQDEFYRWFQKMVVALEPPVELQLGLKEKQWQLSHAQVLLHNVDNQAVLLDRLLEEAGSLFSRIGDPSVDEDAQKRMKAEYDAVKARAQRRVDLLAQVAQDHEQYREDVNEFQLWLKAVVEKVHSCLGRNCKLATELRLSTLQDIAKDFPRGEESLKRLEEQAVGVIQNTSPLGAEKISGELEEMRGVLEKLRVLWKEEEGRLRGLLQSRGDCEQQIQQLEAELGDFKKSLQRLAQEGLEPTVKTATEDELVAQWRLFSGTRAALASEEPRVDRLQTQLKKLVTFPDLQSLSDSVVATIQEYQSMKGKNTRLHNATRAELWQRFQRPLNDLQLWKALAQRLLDITASLPDLASIHTFLPQIEAALTESSRLKEQLAMLQLKTDLLGSIFGQERAATLLEQVTSSVRDRDLLHNSLLQRKSKLQSLLVQHKDFGVAFDPLNRKLLDLQARIQAEKGLPRDLPGKQVQLLRLQGLQEEGLDLGTQIEAVRPLAHGNSKHQQKVDQISCDQQALQRSLEDLVDRCQQNVREHCTFSHRLSELQLWITMATQTLESHQGDVRLWDAESQEAGLETLLSEIPEKEVQVSLLQALGQLVMKKSSPEGATMVQEELRKLMESWQALRLLEENMLSLMRNQQLQRTEVDTGKKQVFTNNIPKAGFLINPQDPIPRRQHGANPLEGHDLPEDHPQLLRDFEQWLQAENSKLRRIITMRVATAKDLRTREVKLQELEARIPEGQHLFENLLRLRPARDPSNELEDLRYRWMLYKSKLKDSGHLLTESSPGELTAFQKSRRQKRWSPCSLLQKACRVALPLQLLLLLFLLLLFLLPAGEEERSCALANNFARSFALMLRYNGPPPT.

Topologically, residues 1 to 925 (MTQQPQEDFE…PCSLLQKACR (925 aa)) are cytoplasmic. Spectrin repeat units lie at residues 220-325 (QDHE…RLRG) and 647-740 (REHC…QALR). The disordered stretch occupies residues 778–798 (LINPQDPIPRRQHGANPLEGH). One can recognise a KASH domain in the interval 917 to 975 (CSLLQKACRVALPLQLLLLLFLLLLFLLPAGEEERSCALANNFARSFALMLRYNGPPPT). A helical; Anchor for type IV membrane protein membrane pass occupies residues 926–946 (VALPLQLLLLLFLLLLFLLPA). Over 947-975 (GEEERSCALANNFARSFALMLRYNGPPPT) the chain is Perinuclear space.

Belongs to the nesprin family. As to quaternary structure, core component of LINC complexes which are composed of inner nuclear membrane SUN domain-containing proteins coupled to outer nuclear membrane KASH domain-containing nesprins. SUN and KASH domain-containing proteins seem to bind each other promiscuously; however, differentially expression of LINC complex constituents can give rise to specific assemblies. Interacts with SUN1 and SUN2; probably forming respective LINC complexes. Interacts with PLEC (via actin-binding domain). Interacts with DST. Interacts with SYNE1. Interacts (via KASH domain) with TOR1A (ATP-bound); the interaction is required for SYNE3 nuclear envelope localization. Post-translationally, the disulfid bond with SUN1 or SUN2 is required for stability of the respective LINC complex under tensile forces. Ubiquitous.

It localises to the nucleus outer membrane. Its subcellular location is the nucleus envelope. The protein localises to the rough endoplasmic reticulum. Its function is as follows. As a component of the LINC (LInker of Nucleoskeleton and Cytoskeleton) complex involved in the connection between the nuclear lamina and the cytoskeleton. The nucleocytoplasmic interactions established by the LINC complex play an important role in the transmission of mechanical forces across the nuclear envelope and in nuclear movement and positioning. Probable anchoring protein which tethers the nucleus to the cytoskeleton by binding PLEC which can associate with the intermediate filament system. Plays a role in the regulation of aortic epithelial cell morphology, and is required for flow-induced centrosome polarization and directional migration in aortic endothelial cells. In Mus musculus (Mouse), this protein is Nesprin-3 (Syne3).